We begin with the raw amino-acid sequence, 501 residues long: Lysine--tRNA ligase (501 aa).

Residues Asp-411 and Glu-418 each coordinate Mg(2+).

It belongs to the class-II aminoacyl-tRNA synthetase family. As to quaternary structure, homodimer. The cofactor is Mg(2+).

It is found in the cytoplasm. The enzyme catalyses tRNA(Lys) + L-lysine + ATP = L-lysyl-tRNA(Lys) + AMP + diphosphate. The protein is Lysine--tRNA ligase of Mycolicibacterium gilvum (strain PYR-GCK) (Mycobacterium gilvum (strain PYR-GCK)).